We begin with the raw amino-acid sequence, 349 residues long: Anthranilate phosphoribosyltransferase (349 aa).

Residues Gly-84, 87–88, Thr-92, 94–97, 112–120, and Ser-124 contribute to the 5-phospho-alpha-D-ribose 1-diphosphate site; these read GD, NIST, and KHGNRAASS. Gly-84 contacts anthranilate. Ser-96 is a binding site for Mg(2+). Asn-115 serves as a coordination point for anthranilate. An anthranilate-binding site is contributed by Arg-170. Asp-228 and Glu-229 together coordinate Mg(2+).

The protein belongs to the anthranilate phosphoribosyltransferase family. Homodimer. Mg(2+) serves as cofactor.

It catalyses the reaction N-(5-phospho-beta-D-ribosyl)anthranilate + diphosphate = 5-phospho-alpha-D-ribose 1-diphosphate + anthranilate. It participates in amino-acid biosynthesis; L-tryptophan biosynthesis; L-tryptophan from chorismate: step 2/5. Its function is as follows. Catalyzes the transfer of the phosphoribosyl group of 5-phosphorylribose-1-pyrophosphate (PRPP) to anthranilate to yield N-(5'-phosphoribosyl)-anthranilate (PRA). The chain is Anthranilate phosphoribosyltransferase from Leifsonia xyli subsp. xyli (strain CTCB07).